The sequence spans 239 residues: Seed lectin beta chain (239 aa).

D-glucose contacts are provided by aspartate 88 and glycine 106. Positions 126 and 128 each coordinate Mn(2+). Residues aspartate 128, asparagine 132, and aspartate 137 each coordinate Ca(2+). Mn(2+) contacts are provided by aspartate 137 and histidine 142. D-glucose-binding residues include glycine 217 and alanine 218.

The protein belongs to the leguminous lectin family. In terms of assembly, tetramer consisting of heterodimers of alpha and beta chains.

Galactose-binding lectin. Agglutinates human erythrocytes, and requires Ca(2+) and Mn(2+) ions for full agglutinating activity. Has antifungal activity against Fusarium sp., A.niger and A.flavus. This chain is Seed lectin beta chain, found in Spatholobus parviflorus (Butea parviflora).